Reading from the N-terminus, the 94-residue chain is Protein EGG APPARATUS-1 (94 aa).

Residues 1 to 15 (MSSCPAIVNMKDDDG) lie on the Cytoplasmic side of the membrane. Residues 16–36 (IGAMGAAVAFAAMGVFGIYFL) traverse the membrane as a helical; Signal-anchor for type II membrane protein segment. Topologically, residues 37–94 (WPVVGPTSAGMMMKAPGAAGWVICRAVFEANPQLYFTILRTAGAAAAAATFAACSIAS) are extracellular.

Possible proteolysis of the C-terminal region from the predicted transmembrane domain to permit secretion and transport of the mature protein to the cell walls of the nucellus, allowing the spreading from the egg cell apparatus to the micropylar opening of the ovule. As to expression, expressed only in the egg apparatus, consisting of the egg cell and two synergids. Not detected in the central cell, antipodals, and nucellar and integumental cells.

Its subcellular location is the membrane. Functionally, involved in short-range signaling required for pollen tube attraction by the female gametophyte. Required for female fertility. In Zea mays (Maize), this protein is Protein EGG APPARATUS-1 (Ea1).